A 746-amino-acid chain; its full sequence is Mediator of RNA polymerase II transcription subunit 25 (746 aa).

Residues 1-226 (MVPGSEGPAR…PRHMVLVRGL (226 aa)) form an interaction with the Mediator complex region. 2 disordered regions span residues 233 to 273 (GSAP…QQYQ) and 298 to 390 (GLGP…PALG). Positions 238-251 (PLQPKQPVPLPPAA) are enriched in pro residues. A compositionally biased stretch (low complexity) spans 252-262 (PAGATLSTAPQ). A compositionally biased stretch (pro residues) spans 329–342 (PPGPPGAPKPPPAS). Positions 343–354 (QPSLVSTVAPGP) are enriched in low complexity. The interaction with VP16 stretch occupies residues 389-543 (LGGQQSVSNK…VNGIRQVITN (155 aa)). An interaction with CREBBP region spans residues 395–545 (VSNKLLAWSG…GIRQVITNHK (151 aa)). The interval 548–746 (QQQKLEQQRG…MEDDILMDLI (199 aa)) is disordered. 2 interaction with RARA regions span residues 563 to 652 (APPG…LLNP) and 639 to 706 (PGAN…WPAQ). Positions 599–610 (AAAGQPQPQGAA) are enriched in low complexity. Residues 611 to 633 (PAPPGAPQGPPGAAPGPPPPGPL) are compositionally biased toward pro residues. Positions 645–649 (LRSLL) match the LXXLL motif motif. 3 stretches are compositionally biased toward pro residues: residues 651 to 663 (NPPP…PPPQ), 672 to 682 (PGAPALLPPPH), and 690 to 701 (LGPPLLHPPPAQ). Arginine 724 carries the asymmetric dimethylarginine modification. The span at 737-746 (MEDDILMDLI) shows a compositional bias: acidic residues.

Belongs to the Mediator complex subunit 25 family. In terms of assembly, component of the Mediator complex, which is composed of MED1, MED4, MED6, MED7, MED8, MED9, MED10, MED11, MED12, MED13, MED13L, MED14, MED15, MED16, MED17, MED18, MED19, MED20, MED21, MED22, MED23, MED24, MED25, MED26, MED27, MED29, MED30, MED31, CCNC, CDK8 and CDC2L6/CDK11. The MED12, MED13, CCNC and CDK8 subunits form a distinct module termed the CDK8 module. Mediator containing the CDK8 module is less active than Mediator lacking this module in supporting transcriptional activation. Individual preparations of the Mediator complex lacking one or more distinct subunits have been variously termed ARC, CRSP, DRIP, PC2, SMCC and TRAP. Interacts with CREBBP. Interacts with ESR1, GR, RARA, RXRA and THRB in a ligand-dependent fashion. Binds the Herpes simplex virus activator VP16.

It localises to the nucleus. Component of the Mediator complex, a coactivator involved in the regulated transcription of nearly all RNA polymerase II-dependent genes. Mediator functions as a bridge to convey information from gene-specific regulatory proteins to the basal RNA polymerase II transcription machinery. Mediator is recruited to promoters by direct interactions with regulatory proteins and serves as a scaffold for the assembly of a functional preinitiation complex with RNA polymerase II and the general transcription factors. Required for RARA/RXRA-mediated transcription. In Bos taurus (Bovine), this protein is Mediator of RNA polymerase II transcription subunit 25 (MED25).